The sequence spans 868 residues: Muscle, skeletal receptor tyrosine-protein kinase (868 aa).

Positions 1 to 21 are cleaved as a signal peptide; the sequence is MRELVNIPLLQMLTLVAFSGT. Residues 22–494 lie on the Extracellular side of the membrane; it reads EKLPKAPVIT…FAVSPAYSMT (473 aa). 3 consecutive Ig-like domains span residues 28 to 116, 121 to 205, and 212 to 302; these read PVIT…GALQ, PKIT…KLVK, and ARIL…ATVS. Disulfide bonds link Cys-49-Cys-99, Cys-98-Cys-112, and Cys-142-Cys-190. A glycan (N-linked (GlcNAc...) asparagine) is linked at Asn-222. Disulfide bonds link Cys-233/Cys-282, Cys-317/Cys-382, Cys-325/Cys-375, Cys-366/Cys-406, Cys-394/Cys-447, and Cys-398/Cys-434. The 139-residue stretch at 312–450 folds into the FZ domain; the sequence is DSQGYCAQYR…HRDPTACTRL (139 aa). A glycan (N-linked (GlcNAc...) asparagine) is linked at Asn-338. N-linked (GlcNAc...) asparagine glycosylation is present at Asn-459. A helical transmembrane segment spans residues 495 to 515; the sequence is VIISIVSSFALFALLTIATLY. Topologically, residues 516–868 are cytoplasmic; that stretch reads CCRRRKEWKN…CERAEGTVGV (353 aa). Tyr-553 carries the phosphotyrosine; by autocatalysis modification. Residues 574–855 enclose the Protein kinase domain; sequence IEYVRDIGEG…PSFCSIHRIL (282 aa). Residues 580–588 and Lys-608 contribute to the ATP site; that span reads IGEGAFGRV. Ser-680 and Ser-697 each carry phosphoserine; by CK2. Asp-724 serves as the catalytic Proton acceptor. Tyr-754 carries the phosphotyrosine; by autocatalysis modification.

The protein belongs to the protein kinase superfamily. Tyr protein kinase family. As to quaternary structure, monomer. Homodimer. Interacts with LRP4; the heterodimer forms an AGRIN receptor complex that binds AGRIN resulting in activation of MUSK. Forms a heterotetramer composed of 2 DOK7 and 2 MUSK molecules which facilitates MUSK trans-autophosphorylation on tyrosine residue and activation. Interacts (via cytoplasmic part) with DOK7 (via IRS-type PTB domain); requires MUSK phosphorylation. Interacts with DVL1 (via DEP domain); the interaction is direct and mediates the formation of a DVL1, MUSK and PAK1 ternary complex involved in AChR clustering. Interacts with PDZRN3; this interaction is enhanced by agrin. Interacts with FNTA; the interaction is direct and mediates AGRIN-induced phosphorylation and activation of FNTA. Interacts with CSNK2B; mediates regulation by CK2. Interacts (via the cytoplasmic domain) with DNAJA3. Interacts with NSF; may regulate MUSK endocytosis and activity. Interacts with CAV3; may regulate MUSK signaling. Interacts with RNF31. Mg(2+) serves as cofactor. Post-translationally, ubiquitinated by PDZRN3. Ubiquitination promotes endocytosis and lysosomal degradation. Phosphorylated. Phosphorylation is induced by AGRIN. Autophosphorylated. Autophosphorylation at Tyr-553 is required for interaction with DOK7 which in turn stimulates the phosphorylation and the activation of MUSK. In terms of processing, neddylated. As to expression, expressed preferentially in skeletal muscle.

The protein resides in the postsynaptic cell membrane. It catalyses the reaction L-tyrosyl-[protein] + ATP = O-phospho-L-tyrosyl-[protein] + ADP + H(+). Positively regulated by CK2. Functionally, receptor tyrosine kinase which plays a central role in the formation and the maintenance of the neuromuscular junction (NMJ), the synapse between the motor neuron and the skeletal muscle. Recruitment of AGRIN by LRP4 to the MUSK signaling complex induces phosphorylation and activation of MUSK, the kinase of the complex. The activation of MUSK in myotubes regulates the formation of NMJs through the regulation of different processes including the specific expression of genes in subsynaptic nuclei, the reorganization of the actin cytoskeleton and the clustering of the acetylcholine receptors (AChR) in the postsynaptic membrane. May regulate AChR phosphorylation and clustering through activation of ABL1 and Src family kinases which in turn regulate MUSK. DVL1 and PAK1 that form a ternary complex with MUSK are also important for MUSK-dependent regulation of AChR clustering. May positively regulate Rho family GTPases through FNTA. Mediates the phosphorylation of FNTA which promotes prenylation, recruitment to membranes and activation of RAC1 a regulator of the actin cytoskeleton and of gene expression. Other effectors of the MUSK signaling include DNAJA3 which functions downstream of MUSK. May also play a role within the central nervous system by mediating cholinergic responses, synaptic plasticity and memory formation. The polypeptide is Muscle, skeletal receptor tyrosine-protein kinase (Musk) (Mus musculus (Mouse)).